The sequence spans 324 residues: Geranylgeranyl diphosphate synthase (324 aa).

3 residues coordinate isopentenyl diphosphate: lysine 46, arginine 49, and histidine 78. 2 residues coordinate Mg(2+): aspartate 85 and aspartate 89. Arginine 94 contacts an all-trans-polyprenyl diphosphate. An isopentenyl diphosphate-binding site is contributed by arginine 95. An all-trans-polyprenyl diphosphate contacts are provided by lysine 176, threonine 177, glutamine 214, lysine 231, and lysine 241.

The protein belongs to the FPP/GGPP synthase family. Mg(2+) serves as cofactor.

The catalysed reaction is isopentenyl diphosphate + (2E,6E)-farnesyl diphosphate = (2E,6E,10E)-geranylgeranyl diphosphate + diphosphate. The protein operates within isoprenoid biosynthesis; geranylgeranyl diphosphate biosynthesis; geranylgeranyl diphosphate from farnesyl diphosphate and isopentenyl diphosphate: step 1/1. Functionally, catalyzes the sequential condensation of isopentenyl pyrophosphate with the allylic pyrophosphates to yield geranylgeranyl diphosphate (GGPP) which is a precursor of the ether-linked lipids. This Methanosarcina mazei (strain ATCC BAA-159 / DSM 3647 / Goe1 / Go1 / JCM 11833 / OCM 88) (Methanosarcina frisia) protein is Geranylgeranyl diphosphate synthase.